A 474-amino-acid chain; its full sequence is Kynureninase 2 (474 aa).

Pyridoxal 5'-phosphate is bound by residues leucine 144, threonine 145, 172-175 (FPSD), aspartate 258, histidine 261, and tyrosine 283. Lysine 284 carries the post-translational modification N6-(pyridoxal phosphate)lysine. The pyridoxal 5'-phosphate site is built by tryptophan 323 and threonine 351.

Belongs to the kynureninase family. As to quaternary structure, homodimer. The cofactor is pyridoxal 5'-phosphate.

Its subcellular location is the cytoplasm. The enzyme catalyses L-kynurenine + H2O = anthranilate + L-alanine + H(+). It catalyses the reaction 3-hydroxy-L-kynurenine + H2O = 3-hydroxyanthranilate + L-alanine + H(+). The protein operates within amino-acid degradation; L-kynurenine degradation; L-alanine and anthranilate from L-kynurenine: step 1/1. Its pathway is cofactor biosynthesis; NAD(+) biosynthesis; quinolinate from L-kynurenine: step 2/3. Functionally, catalyzes the cleavage of L-kynurenine (L-Kyn) and L-3-hydroxykynurenine (L-3OHKyn) into anthranilic acid (AA) and 3-hydroxyanthranilic acid (3-OHAA), respectively. This Emericella nidulans (strain FGSC A4 / ATCC 38163 / CBS 112.46 / NRRL 194 / M139) (Aspergillus nidulans) protein is Kynureninase 2 (bna5-2).